We begin with the raw amino-acid sequence, 708 residues long: G-box-binding factor (708 aa).

2 disordered regions span residues 1-29 (MLSTHHHQGNSSSSSSSSSPSQTIGGSDL) and 123-339 (QQAQ…QTIP). Low complexity-rich tracts occupy residues 11–21 (SSSSSSSSSPS), 123–219 (QQAQ…QHHQ), and 227–316 (SQPQ…SPST). Over residues 324–333 (ETSNSEKKDS) the composition is skewed to basic and acidic residues. Tandem repeats lie at residues 339-368 (PKCTRCNEAASWKHDKRRWWCKECKKAFTP) and 481-510 (PPCPLCRGISSWKHDKKRYFCKECKKPFTP). The interval 511–604 (VGAGLSPSSS…PTYSPNPSLP (94 aa)) is disordered. Residues 516 to 590 (SPSSSPSSPK…SSISQSPLQL (75 aa)) are compositionally biased toward low complexity. Residues 591 to 600 (NYQTPTYSPN) are compositionally biased toward polar residues.

The protein localises to the nucleus. In terms of biological role, cAMP-responsive transcriptional activator regulating late gene expression. Essential component of the developmental switch between early and late development. Binds to a number of CA/GT-rich gene regulatory elements. This is G-box-binding factor (gbfA) from Dictyostelium discoideum (Social amoeba).